A 412-amino-acid polypeptide reads, in one-letter code: Serine hydroxymethyltransferase (412 aa).

Residues Leu-117 and 121–123 (GHL) each bind (6S)-5,6,7,8-tetrahydrofolate. N6-(pyridoxal phosphate)lysine is present on Lys-226. (6S)-5,6,7,8-tetrahydrofolate contacts are provided by residues Glu-242 and 350 to 352 (SPF).

It belongs to the SHMT family. As to quaternary structure, homodimer. The cofactor is pyridoxal 5'-phosphate.

It is found in the cytoplasm. It catalyses the reaction (6R)-5,10-methylene-5,6,7,8-tetrahydrofolate + glycine + H2O = (6S)-5,6,7,8-tetrahydrofolate + L-serine. Its pathway is one-carbon metabolism; tetrahydrofolate interconversion. It participates in amino-acid biosynthesis; glycine biosynthesis; glycine from L-serine: step 1/1. In terms of biological role, catalyzes the reversible interconversion of serine and glycine with tetrahydrofolate (THF) serving as the one-carbon carrier. Also exhibits THF-independent aldolase activity toward beta-hydroxyamino acids, producing glycine and aldehydes, via a retro-aldol mechanism. The sequence is that of Serine hydroxymethyltransferase from Methanosarcina mazei (strain ATCC BAA-159 / DSM 3647 / Goe1 / Go1 / JCM 11833 / OCM 88) (Methanosarcina frisia).